The primary structure comprises 197 residues: Neurturin (197 aa).

The N-terminal stretch at 1–19 is a signal peptide; the sequence is MQRWKAAALASVLCSSVLS. The propeptide occupies 20–95; the sequence is IWMCREGLLL…RAGPRRRRAR (76 aa). Residues 74–93 form a disordered region; the sequence is TPWAGRPPGPRRRAGPRRRR. A compositionally biased stretch (basic residues) spans 82–93; that stretch reads GPRRRAGPRRRR. Cystine bridges form between Cys-103–Cys-165, Cys-130–Cys-194, and Cys-134–Cys-196. Positions 149, 158, 160, and 162 each coordinate heparan sulfate group.

It belongs to the TGF-beta family. GDNF subfamily. Homodimer; disulfide-linked. Interacts with GFRA2 coreceptor and RET: forms a 2:2:2 ternary complex composed of NRTN ligand, GFRA2 and RET receptor. Also forms a 4:4:4 tetrameric complex composed of 4 copies of NRTN ligand, GFRA2 and RET receptor, which prevents endocytosis of RET.

It localises to the secreted. In terms of biological role, growth factor that supports the survival of sympathetic neurons in culture. May regulate the development and maintenance of the CNS. Involved in the development of the neural crest. Might control the size of non-neuronal cell population such as haemopoietic cells. Acts by binding to its coreceptor, GFRA2, leading to autophosphorylation and activation of the RET receptor. Heparan sulfate-binding is required for signaling. In Homo sapiens (Human), this protein is Neurturin.